Here is a 396-residue protein sequence, read N- to C-terminus: S-adenosylmethionine synthase (396 aa).

His-15 is a binding site for ATP. Asp-17 serves as a coordination point for Mg(2+). Glu-43 provides a ligand contact to K(+). Glu-56 and Gln-99 together coordinate L-methionine. The interval 99–109 is flexible loop; that stretch reads QSPDIALGVNR. Residues 175 to 177, 241 to 242, Asp-250, 256 to 257, Ala-273, and Lys-277 contribute to the ATP site; these read DGK, RF, and RK. Asp-250 lines the L-methionine pocket. Lys-281 is a binding site for L-methionine.

This sequence belongs to the AdoMet synthase family. Homotetramer; dimer of dimers. Requires Mg(2+) as cofactor. The cofactor is K(+).

The protein localises to the cytoplasm. The catalysed reaction is L-methionine + ATP + H2O = S-adenosyl-L-methionine + phosphate + diphosphate. It participates in amino-acid biosynthesis; S-adenosyl-L-methionine biosynthesis; S-adenosyl-L-methionine from L-methionine: step 1/1. Catalyzes the formation of S-adenosylmethionine (AdoMet) from methionine and ATP. The overall synthetic reaction is composed of two sequential steps, AdoMet formation and the subsequent tripolyphosphate hydrolysis which occurs prior to release of AdoMet from the enzyme. The sequence is that of S-adenosylmethionine synthase from Carboxydothermus hydrogenoformans (strain ATCC BAA-161 / DSM 6008 / Z-2901).